Consider the following 381-residue polypeptide: Creatine kinase M-type (381 aa).

Residues 11–98 (KLNYKPEEEY…FDPIIQDRHG (88 aa)) form the Phosphagen kinase N-terminal domain. A Phosphagen kinase C-terminal domain is found at 125 to 367 (YVLSSRVRTG…KLMVEMEKKL (243 aa)). 128-132 (SSRVR) serves as a coordination point for ATP. Phosphoserine is present on Ser-164. Thr-166 is subject to Phosphothreonine. At Ser-178 the chain carries Phosphoserine. Phosphothreonine is present on Thr-180. His-191 contacts ATP. Phosphoserine is present on Ser-199. Arg-236 and Arg-292 together coordinate ATP. Thr-313 and Thr-322 each carry phosphothreonine. ATP-binding positions include 320–325 (RGTGGV) and Asp-335. At Ser-372 the chain carries Phosphoserine.

It belongs to the ATP:guanido phosphotransferase family. Dimer of identical or non-identical chains, which can be either B (brain type) or M (muscle type). With MM being the major form in skeletal muscle and myocardium, MB existing in myocardium, and BB existing in many tissues, especially brain.

It is found in the cytoplasm. The catalysed reaction is creatine + ATP = N-phosphocreatine + ADP + H(+). Reversibly catalyzes the transfer of phosphate between ATP and various phosphogens (e.g. creatine phosphate). Creatine kinase isoenzymes play a central role in energy transduction in tissues with large, fluctuating energy demands, such as skeletal muscle, heart, brain and spermatozoa. The protein is Creatine kinase M-type (CKM) of Canis lupus familiaris (Dog).